Consider the following 435-residue polypeptide: E3 ubiquitin-protein ligase PUB22 (435 aa).

The region spanning Glu6–Tyr81 is the U-box domain.

In terms of assembly, interacts with RPN12A. Binds to EXO70B2. Post-translationally, auto-ubiquitinated leading to degradation via the 26S proteasome. This Auto-ubiquitination is repressed by the bacterial elicitor flg22 thus leading to a transiently increased protein stabilization and accumulation.

The protein resides in the cytoplasm. It catalyses the reaction S-ubiquitinyl-[E2 ubiquitin-conjugating enzyme]-L-cysteine + [acceptor protein]-L-lysine = [E2 ubiquitin-conjugating enzyme]-L-cysteine + N(6)-ubiquitinyl-[acceptor protein]-L-lysine.. It functions in the pathway protein modification; protein ubiquitination. E3 ubiquitin-protein ligase that negatively regulates water stress response. May control in coordination with PUB23 a drought signaling pathway by ubiquitinating cytosolic RPN12a. Acts as a negative regulator of the immunity triggered by the pathogen-associated molecular patterns (PAMPs), in association with PUB23 and PUB24. Regulates EXO70B2 ubiquitination and degradation via the 26S proteasome to attenuate PAMP-induced signaling. The sequence is that of E3 ubiquitin-protein ligase PUB22 from Arabidopsis thaliana (Mouse-ear cress).